Consider the following 409-residue polypeptide: Threonine dehydratase-like protein AKTS1-1 (409 aa).

The interval 1 to 21 (MADYLRQVMPENDSDSEALPR) is disordered. Lysine 111 is subject to N6-(pyridoxal phosphate)lysine. Pyridoxal 5'-phosphate-binding positions include asparagine 138, 239–243 (GEGSL), and serine 368.

It belongs to the serine/threonine dehydratase family. The cofactor is pyridoxal 5'-phosphate.

The protein operates within mycotoxin biosynthesis. Functionally, threonine dehydratase-like protein; part of the gene clusters that mediate the biosynthesis of the host-selective toxins (HSTs) AK-toxins responsible for Japanese pear black spot disease by the Japanese pear pathotype. AK-toxins are esters of 9,10-epoxy 8-hydroxy 9-methyldecatrienoic acid (EDA). On cellular level, AK-toxins affect plasma membrane of susceptible cells and cause a sudden increase in loss of K(+) after a few minutes of toxin treatment. The acyl-CoA ligase AKT1, the hydrolase AKT2 and enoyl-CoA hydratase AKT3 are all involved in the biosynthesis of the AK-, AF- and ACT-toxin common 9,10-epoxy-8-hydroxy-9-methyl-decatrienoic acid (EDA) structural moiety. Part of the EDA biosynthesis occurs in the peroxisome since these 3 enzymes are localized in peroxisomes. The exact roles of the 3 enzymes, as well as of additional AK-toxin clusters enzymes, including AKT4, AKT6 and AKTS1, have still to be elucidated. The Cytochrome P450 monooxygenase AKT7 on the other side functions to limit production of EDA and AK-toxin, probably via the catalysis of a side reaction of EDA or its precursor. The protein is Threonine dehydratase-like protein AKTS1-1 of Alternaria alternata (Alternaria rot fungus).